Reading from the N-terminus, the 440-residue chain is Chromosome partition protein MukF (440 aa).

The leucine-zipper stretch occupies residues 208-236 (LSETSGTLRELQDTLDAAGDKLQANLLRI).

Belongs to the MukF family. In terms of assembly, interacts, and probably forms a ternary complex, with MukE and MukB via its C-terminal region. The complex formation is stimulated by calcium or magnesium. It is required for an interaction between MukE and MukB.

It localises to the cytoplasm. The protein resides in the nucleoid. Its function is as follows. Involved in chromosome condensation, segregation and cell cycle progression. May participate in facilitating chromosome segregation by condensation DNA from both sides of a centrally located replisome during cell division. Not required for mini-F plasmid partitioning. Probably acts via its interaction with MukB and MukE. Overexpression results in anucleate cells. It has a calcium binding activity. This Klebsiella pneumoniae subsp. pneumoniae (strain ATCC 700721 / MGH 78578) protein is Chromosome partition protein MukF.